The following is a 493-amino-acid chain: Growth-regulating factor 8 (493 aa).

In terms of domain architecture, QLQ spans 149–184 (AFSEAQWHELERQRNIYKYMMASVPVPPELLTPFPK). Positions 243-287 (DLEPWRCKRTDGKKWRCSRNVIPDQKYCERHTHKSRPRSRKHVES) constitute a WRC domain. Short sequence motifs (bipartite nuclear localization signal) lie at residues 248-258 (RCKRTDGKKWR) and 276-283 (KSRPRSRK). The interval 270 to 302 (CERHTHKSRPRSRKHVESSHQSSHHNDIRTAKN) is disordered. Residues 273–283 (HTHKSRPRSRK) show a composition bias toward basic residues.

The protein belongs to the GRF family. As to expression, predominantly expressed in shoot tips and flowers.

It is found in the nucleus. In terms of biological role, transcription activator that plays a role in the regulation of cell expansion in leaf and cotyledons tissues. Component of a network formed by miR396, the GRFs and their interacting factors (GIFs) acting in the regulation of meristem function, at least partially through the control of cell proliferation. This Arabidopsis thaliana (Mouse-ear cress) protein is Growth-regulating factor 8 (GRF8).